We begin with the raw amino-acid sequence, 317 residues long: Acetyl-coenzyme A carboxylase carboxyl transferase subunit beta (317 aa).

The CoA carboxyltransferase N-terminal domain maps to Leu-30–Lys-299. Residues Cys-34, Cys-37, Cys-53, and Cys-56 each coordinate Zn(2+). The C4-type zinc-finger motif lies at Cys-34–Cys-56.

Belongs to the AccD/PCCB family. In terms of assembly, acetyl-CoA carboxylase is a heterohexamer composed of biotin carboxyl carrier protein (AccB), biotin carboxylase (AccC) and two subunits each of ACCase subunit alpha (AccA) and ACCase subunit beta (AccD). Requires Zn(2+) as cofactor.

The protein localises to the cytoplasm. It catalyses the reaction N(6)-carboxybiotinyl-L-lysyl-[protein] + acetyl-CoA = N(6)-biotinyl-L-lysyl-[protein] + malonyl-CoA. It functions in the pathway lipid metabolism; malonyl-CoA biosynthesis; malonyl-CoA from acetyl-CoA: step 1/1. Component of the acetyl coenzyme A carboxylase (ACC) complex. Biotin carboxylase (BC) catalyzes the carboxylation of biotin on its carrier protein (BCCP) and then the CO(2) group is transferred by the transcarboxylase to acetyl-CoA to form malonyl-CoA. This chain is Acetyl-coenzyme A carboxylase carboxyl transferase subunit beta, found in Crocosphaera subtropica (strain ATCC 51142 / BH68) (Cyanothece sp. (strain ATCC 51142)).